A 1793-amino-acid polypeptide reads, in one-letter code: Brefeldin A-inhibited guanine nucleotide-exchange protein 2 (1793 aa).

Ala2 carries the N-acetylalanine modification. 3 disordered regions span residues Asn45–Leu71, Thr266–Ser299, and Gly579–Ser606. Residues Ser55–Ser66 are compositionally biased toward low complexity. The span at Ser270–Gly281 shows a compositional bias: gly residues. 2 stretches are compositionally biased toward polar residues: residues Gly284–Thr294 and Gly594–Thr605. At Ser595 the chain carries Phosphoserine. One can recognise an SEC7 domain in the interval Ala610–His797. The active site involves Glu712. Polar residues predominate over residues Asn1311–Ser1327. Positions Asn1311–Gln1333 are disordered.

Homodimer.

It localises to the cytoplasm. The protein resides in the cytosol. It is found in the membrane. Inhibited by brefeldin A. Activates the ARF proteins by exchanging bound GDP for free GTP. Plays a role in vesicular protein sorting. The chain is Brefeldin A-inhibited guanine nucleotide-exchange protein 2 (BIG2) from Arabidopsis thaliana (Mouse-ear cress).